The chain runs to 314 residues: DNA-directed RNA polymerase subunit alpha (314 aa).

Residues 1 to 228 (MIEIEKPRIE…EHLNIFVGLT (228 aa)) form an alpha N-terminal domain (alpha-NTD) region. Positions 245-314 (KEKVLEMSIE…DLGLGLRKED (70 aa)) are alpha C-terminal domain (alpha-CTD).

Belongs to the RNA polymerase alpha chain family. Homodimer. The RNAP catalytic core consists of 2 alpha, 1 beta, 1 beta' and 1 omega subunit. When a sigma factor is associated with the core the holoenzyme is formed, which can initiate transcription.

It carries out the reaction RNA(n) + a ribonucleoside 5'-triphosphate = RNA(n+1) + diphosphate. In terms of biological role, DNA-dependent RNA polymerase catalyzes the transcription of DNA into RNA using the four ribonucleoside triphosphates as substrates. In Staphylococcus aureus (strain bovine RF122 / ET3-1), this protein is DNA-directed RNA polymerase subunit alpha.